A 147-amino-acid polypeptide reads, in one-letter code: Large ribosomal subunit protein uL15 (147 aa).

The disordered stretch occupies residues M1–T58. Residues S42–G52 show a composition bias toward gly residues.

Belongs to the universal ribosomal protein uL15 family. In terms of assembly, part of the 50S ribosomal subunit.

Functionally, binds to the 23S rRNA. The sequence is that of Large ribosomal subunit protein uL15 from Caldanaerobacter subterraneus subsp. tengcongensis (strain DSM 15242 / JCM 11007 / NBRC 100824 / MB4) (Thermoanaerobacter tengcongensis).